Reading from the N-terminus, the 906-residue chain is Valine--tRNA ligase (906 aa).

The 'HIGH' region signature appears at 43–53 (PNVTGSLHIGH). Residues 548 to 552 (KMSKS) carry the 'KMSKS' region motif. Lys-551 is a binding site for ATP. Positions 842–905 (EKARLTKDIA…EAALSRLASV (64 aa)) form a coiled coil.

This sequence belongs to the class-I aminoacyl-tRNA synthetase family. ValS type 1 subfamily. As to quaternary structure, monomer.

Its subcellular location is the cytoplasm. The catalysed reaction is tRNA(Val) + L-valine + ATP = L-valyl-tRNA(Val) + AMP + diphosphate. Functionally, catalyzes the attachment of valine to tRNA(Val). As ValRS can inadvertently accommodate and process structurally similar amino acids such as threonine, to avoid such errors, it has a 'posttransfer' editing activity that hydrolyzes mischarged Thr-tRNA(Val) in a tRNA-dependent manner. This chain is Valine--tRNA ligase, found in Caulobacter vibrioides (strain ATCC 19089 / CIP 103742 / CB 15) (Caulobacter crescentus).